Consider the following 142-residue polypeptide: Hemoglobin F-I (142 aa).

Residues 2 to 142 enclose the Globin domain; sequence GLTTAQIKAI…AAGVLVAAMK (141 aa). His-95 serves as a coordination point for heme b.

The protein belongs to the globin family. In terms of assembly, homotetramer.

In terms of biological role, hemoglobin F-I appears to function in storage, rather than transport of oxygen. The polypeptide is Hemoglobin F-I (Urechis caupo (Innkeeper worm)).